A 344-amino-acid polypeptide reads, in one-letter code: Short chain dehydrogenase/reductase mfmJ (344 aa).

NADP(+)-binding residues include L51, K76, D99, N126, Y213, and K217. Catalysis depends on Y213, which acts as the Proton donor. K217 serves as the catalytic Lowers pKa of active site Tyr.

Belongs to the short-chain dehydrogenases/reductases (SDR) family.

Functionally, short chain dehydrogenase/reductase; part of the gene cluster that mediates the biosynthesis of the phthalide-terpenoid hybrid 11'-O-desmethylfendlerol. MfmJ seems not to be involved directly in the biosynthesis of 11'-O-desmethylfendlerol and its role has still to be determined. The biosynthesis of 11'-O-desmethylfendlerol begins with the NR-PKS mfmB that forms 3,5-dimethylorsellinic acid (DMOA), which is then transformed into the phthalide 5,7-dihydroxy-4-(hydroxymethyl)-6-methylphthalide by the cytochrome P450 monooxygenase mfmA and the hydrolase mfmC. Subsequently, the methyltransferase mfmE catalyzes 7-O-methylation to yield 5-hydroxy-4-(hydroxymethyl)-7-methoxy-6-methylphthalide, which undergoes C-3 hydroxylation by the cytochrome P450 monooxygenase mfmF. The resultant cyclopolic acid (2,5-dihydroxy-4-(hydroxymethyl)-7-methoxy-6-methylphthalide) is then farnesylated by the DMATS-type prenyltransferase mfmD to afford 5-O-farnesylcyclopolic acid. Finally, the Pyr4-family terpene cyclase mfmH cyclizes the farnesyl moiety of 5-O-farnesylcyclopolic acid into a drimane-like structure, thus completing the biosynthesis of 11'-O-desmethylfendlerol. This Annulohypoxylon moriforme (Filamentous fungus) protein is Short chain dehydrogenase/reductase mfmJ.